A 647-amino-acid polypeptide reads, in one-letter code: Probable inactive receptor kinase RLK902 (647 aa).

The N-terminal stretch at 1–29 (MRLFFTPSMSNLSIFFSILLLSLPLPSIG) is a signal peptide. LRR repeat units follow at residues 69–93 (GGRV…IFGN), 94–118 (LTQL…LGSC), 119–142 (SDLR…LFSL), 144–165 (NLVR…GFKN), and 166–192 (LTRL…SLDQ). Residues 268–288 (GIVIGCVVGLSLIVMILMVLF) form a helical membrane-spanning segment. Residues 365-639 (RASAEVLGKG…EVVRRIQELR (275 aa)) enclose the Protein kinase domain. Serine 367 carries the post-translational modification Phosphoserine. 371 to 379 (LGKGTFGTA) is an ATP binding site. A Phosphothreonine modification is found at threonine 388. Lysine 393 contributes to the ATP binding site. The residue at position 444 (serine 444) is a Phosphoserine. Threonine 520 carries the phosphothreonine modification. Phosphoserine is present on serine 540. Threonine 618 is subject to Phosphothreonine.

This sequence belongs to the protein kinase superfamily. Ser/Thr protein kinase family. Interacts with At3g17950, At3g27210 and At5g05190. Autophosphorylation. In terms of tissue distribution, expressed in root tips, lateral root primordia, stipules, and floral organ abscission zones.

The protein resides in the cell membrane. This Arabidopsis thaliana (Mouse-ear cress) protein is Probable inactive receptor kinase RLK902 (RLK902).